Consider the following 962-residue polypeptide: Phagocyte signaling-impaired protein (962 aa).

3 TPR repeats span residues 45 to 78 (LCAR…KPTD), 79 to 112 (DSTL…NPGN), and 523 to 560 (QIQL…FTNS). The tract at residues 856–880 (TKVKKKQGDNKTQDTPQPVSEKERS) is disordered.

This sequence belongs to the MDM20/NAA25 family. Component of the N-terminal acetyltransferase B (NatB) complex.

Its subcellular location is the lysosome. In terms of biological role, non-catalytic subunit of the NatB complex which catalyzes acetylation of the N-terminal methionine residues of proteins beginning with Met-Asp or Met-Glu. Has 2 roles in the larval immune response: required both for the phagocytic degradation of internalized bacteria and for the induction of Defensin in the fat body. Within the phagocytic blood cells, has a role in detection of infection and activation of the humoral immune response. This chain is Phagocyte signaling-impaired protein, found in Drosophila pseudoobscura pseudoobscura (Fruit fly).